A 170-amino-acid polypeptide reads, in one-letter code: APRG1 tumor suppressor candidate (170 aa).

Residues 150–170 (IALALAGPGAILILELSWFLG) traverse the membrane as a helical segment.

As to expression, expressed at high levels in the pancreas and placenta. In terms of tissue distribution, expressed at high levels in the kidney.

It localises to the membrane. The chain is APRG1 tumor suppressor candidate from Homo sapiens (Human).